A 135-amino-acid chain; its full sequence is Probable histone H2A.1 (135 aa).

The protein belongs to the histone H2A family. In terms of assembly, the nucleosome is a histone octamer containing two molecules each of H2A, H2B, H3 and H4 assembled in one H3-H4 heterotetramer and two H2A-H2B heterodimers. The octamer wraps approximately 147 bp of DNA.

It localises to the nucleus. The protein localises to the chromosome. Its function is as follows. Core component of nucleosome. Nucleosomes wrap and compact DNA into chromatin, limiting DNA accessibility to the cellular machineries which require DNA as a template. Histones thereby play a central role in transcription regulation, DNA repair, DNA replication and chromosomal stability. DNA accessibility is regulated via a complex set of post-translational modifications of histones, also called histone code, and nucleosome remodeling. This is Probable histone H2A.1 from Oryza sativa subsp. japonica (Rice).